The primary structure comprises 415 residues: Imidazolonepropionase (415 aa).

Histidine 76 and histidine 78 together coordinate Fe(3+). Positions 76 and 78 each coordinate Zn(2+). Residues arginine 85, tyrosine 148, and histidine 181 each contribute to the 4-imidazolone-5-propanoate site. Tyrosine 148 provides a ligand contact to N-formimidoyl-L-glutamate. Residue histidine 246 coordinates Fe(3+). Histidine 246 is a Zn(2+) binding site. 4-imidazolone-5-propanoate is bound at residue glutamate 249. Aspartate 320 serves as a coordination point for Fe(3+). Aspartate 320 contributes to the Zn(2+) binding site. Residues asparagine 322 and glycine 324 each contribute to the N-formimidoyl-L-glutamate site. Position 325 (threonine 325) interacts with 4-imidazolone-5-propanoate.

This sequence belongs to the metallo-dependent hydrolases superfamily. HutI family. The cofactor is Zn(2+). Fe(3+) serves as cofactor.

Its subcellular location is the cytoplasm. The catalysed reaction is 4-imidazolone-5-propanoate + H2O = N-formimidoyl-L-glutamate. It functions in the pathway amino-acid degradation; L-histidine degradation into L-glutamate; N-formimidoyl-L-glutamate from L-histidine: step 3/3. Functionally, catalyzes the hydrolytic cleavage of the carbon-nitrogen bond in imidazolone-5-propanoate to yield N-formimidoyl-L-glutamate. It is the third step in the universal histidine degradation pathway. The protein is Imidazolonepropionase of Caldanaerobacter subterraneus subsp. tengcongensis (strain DSM 15242 / JCM 11007 / NBRC 100824 / MB4) (Thermoanaerobacter tengcongensis).